The chain runs to 438 residues: Trigger factor (438 aa).

One can recognise a PPIase FKBP-type domain in the interval 163–248 (GDIITIDYEG…VKEIKRKELA (86 aa)).

It belongs to the FKBP-type PPIase family. Tig subfamily.

It localises to the cytoplasm. The catalysed reaction is [protein]-peptidylproline (omega=180) = [protein]-peptidylproline (omega=0). Functionally, involved in protein export. Acts as a chaperone by maintaining the newly synthesized protein in an open conformation. Functions as a peptidyl-prolyl cis-trans isomerase. This is Trigger factor from Desulforudis audaxviator (strain MP104C).